An 86-amino-acid chain; its full sequence is Small ribosomal subunit protein bS16 (86 aa).

Belongs to the bacterial ribosomal protein bS16 family.

In Syntrophotalea carbinolica (strain DSM 2380 / NBRC 103641 / GraBd1) (Pelobacter carbinolicus), this protein is Small ribosomal subunit protein bS16.